A 289-amino-acid polypeptide reads, in one-letter code: Thioredoxin-like protein 1 (289 aa).

Residues V2–N109 form the Thioredoxin domain. C34 and C37 are disulfide-bonded. A Phosphoserine modification is found at S113. The 171-residue stretch at E115–K285 folds into the PITH domain.

In terms of assembly, component of the 19S regulatory cap of the 26S proteasome. Interacts with PSMD14/RPN11. Interacts with, and reduces EEF1A1.

The protein resides in the cytoplasm. It localises to the nucleus. Functionally, active thioredoxin with a redox potential of about -250 mV. The polypeptide is Thioredoxin-like protein 1 (Txnl1) (Mus musculus (Mouse)).